We begin with the raw amino-acid sequence, 115 residues long: NADH-ubiquinone oxidoreductase chain 3 (115 aa).

Helical transmembrane passes span 3-23 (LMLTLLTNTLLASLLVLIAFW), 55-75 (FFLVAITFLLFDLEIALLLPL), and 84-104 (LNTMLIMALVLISLLAISLAY).

This sequence belongs to the complex I subunit 3 family. Core subunit of respiratory chain NADH dehydrogenase (Complex I) which is composed of 45 different subunits. Interacts with TMEM186. Interacts with TMEM242.

It localises to the mitochondrion inner membrane. The enzyme catalyses a ubiquinone + NADH + 5 H(+)(in) = a ubiquinol + NAD(+) + 4 H(+)(out). Functionally, core subunit of the mitochondrial membrane respiratory chain NADH dehydrogenase (Complex I) which catalyzes electron transfer from NADH through the respiratory chain, using ubiquinone as an electron acceptor. Essential for the catalytic activity of complex I. The chain is NADH-ubiquinone oxidoreductase chain 3 from Equus caballus (Horse).